A 141-amino-acid chain; its full sequence is Large ribosomal subunit protein uL16 (141 aa).

The tract at residues 1-20 (MLMPKRTKYRKQQKGRNRGK) is disordered.

The protein belongs to the universal ribosomal protein uL16 family. Part of the 50S ribosomal subunit.

Its function is as follows. Binds 23S rRNA and is also seen to make contacts with the A and possibly P site tRNAs. This is Large ribosomal subunit protein uL16 from Nautilia profundicola (strain ATCC BAA-1463 / DSM 18972 / AmH).